The chain runs to 215 residues: Probable septum site-determining protein MinC (215 aa).

This sequence belongs to the MinC family. In terms of assembly, interacts with MinD and FtsZ.

Cell division inhibitor that blocks the formation of polar Z ring septums. Rapidly oscillates between the poles of the cell to destabilize FtsZ filaments that have formed before they mature into polar Z rings. Prevents FtsZ polymerization. The chain is Probable septum site-determining protein MinC from Clostridium botulinum (strain Alaska E43 / Type E3).